Here is a 431-residue protein sequence, read N- to C-terminus: Trigger factor (431 aa).

One can recognise a PPIase FKBP-type domain in the interval 164–249 (GNIAVIDFKG…IKEIKVKELP (86 aa)).

This sequence belongs to the FKBP-type PPIase family. Tig subfamily.

It is found in the cytoplasm. The enzyme catalyses [protein]-peptidylproline (omega=180) = [protein]-peptidylproline (omega=0). In terms of biological role, involved in protein export. Acts as a chaperone by maintaining the newly synthesized protein in an open conformation. Functions as a peptidyl-prolyl cis-trans isomerase. In Clostridium tetani (strain Massachusetts / E88), this protein is Trigger factor.